Reading from the N-terminus, the 523-residue chain is Non-specific phospholipase C3 (523 aa).

The tract at residues 44-64 is disordered; it reads DGVSESEPRSNPLSTSDPNSA. Polar residues predominate over residues 52–64; that stretch reads RSNPLSTSDPNSA.

It belongs to the bacterial phospholipase C family. In terms of tissue distribution, expressed in root tips, cotyledons, on leaf margins, stems, young anthers and funiculus.

It catalyses the reaction a 1-acyl-sn-glycero-3-phosphate + H2O = a 1-acyl-sn-glycerol + phosphate. In terms of biological role, possesses specific phosphatase activity toward lysophosphatidic acid (LPA) in vitro. Does not show phospholipase C activity. May play a role in signal transduction and storage lipid synthesis. May be involved in brassinolide-mediated signaling in root development. The polypeptide is Non-specific phospholipase C3 (NPC3) (Arabidopsis thaliana (Mouse-ear cress)).